Here is a 353-residue protein sequence, read N- to C-terminus: Zinc transporter 5 (353 aa).

The signal sequence occupies residues 1–27 (MATAAMTKVFVLLFLVAACYLPAHAAA). Topologically, residues 28-48 (AECDCATDTAGRDKAQALRLK) are extracellular. A helical membrane pass occupies residues 49-69 (VIAIFCILAGSTVGAALPSLG). Residues 70–86 (GRFPAIQPETDVFLSVK) lie on the Cytoplasmic side of the membrane. A helical membrane pass occupies residues 87 to 107 (AFAGGVILATGLVHILPAAFE). The Extracellular portion of the chain corresponds to 108-121 (ALSSPCLVGGPWKR). The chain crosses the membrane as a helical span at residues 122-142 (FPFAGMVAMVSAIGTLIVDTV). Residues 143–198 (ATGYFHRTDAKRKAAAVADEPADDLEASDEHSHGHAHGMSVMSVAPAGEEDLVRHR) are Cytoplasmic-facing. A helical transmembrane segment spans residues 199–219 (VISQVLELGVVVHSLIIGMSL). At 220–230 (GASDFPSTVRP) the chain is on the extracellular side. Residues 231-251 (LVPALTFHQFFEGIGLGGCIV) form a helical membrane-spanning segment. Residues 252-260 (QAKFRVRSV) lie on the Cytoplasmic side of the membrane. Residues 261–281 (VTMALFFSLTTPAGIVVGIGI) form a helical membrane-spanning segment. The Extracellular segment spans residues 282-292 (SSVYDANSPTA). A helical membrane pass occupies residues 293–313 (LVVQGLLEAAAAGILVYMALV). The Cytoplasmic segment spans residues 314 to 332 (DILAEDFMKTKVQRRGRLQ). The helical transmembrane segment at 333 to 353 (LAMNVALLLGAGLMSMIAIWA) threads the bilayer.

This sequence belongs to the ZIP transporter (TC 2.A.5) family.

The protein localises to the cell membrane. Functionally, zinc transporter that mediates zinc uptake from the rhizosphere and may be responsible for the translocation of zinc within the plant. The chain is Zinc transporter 5 (ZIP5) from Oryza sativa subsp. japonica (Rice).